The following is a 238-amino-acid chain: ATP-dependent dethiobiotin synthetase BioD (238 aa).

ATP is bound at residue 12–17 (GVGKTV). Position 16 (T16) interacts with Mg(2+). K37 is a catalytic residue. T41 is a binding site for substrate. ATP contacts are provided by residues D50, 109–112 (EGAG), 170–171 (GS), and 200–202 (PAG). Mg(2+)-binding residues include D50 and E109.

It belongs to the dethiobiotin synthetase family. Homodimer. It depends on Mg(2+) as a cofactor.

It localises to the cytoplasm. It catalyses the reaction (7R,8S)-7,8-diammoniononanoate + CO2 + ATP = (4R,5S)-dethiobiotin + ADP + phosphate + 3 H(+). The protein operates within cofactor biosynthesis; biotin biosynthesis; biotin from 7,8-diaminononanoate: step 1/2. Functionally, catalyzes a mechanistically unusual reaction, the ATP-dependent insertion of CO2 between the N7 and N8 nitrogen atoms of 7,8-diaminopelargonic acid (DAPA, also called 7,8-diammoniononanoate) to form a ureido ring. In Frankia casuarinae (strain DSM 45818 / CECT 9043 / HFP020203 / CcI3), this protein is ATP-dependent dethiobiotin synthetase BioD.